The chain runs to 246 residues: Aliphatic sulfonates import ATP-binding protein SsuB 2 (246 aa).

One can recognise an ABC transporter domain in the interval 4-218 (VTVRGLRRAF…RRDPRFEQAR (215 aa)). An ATP-binding site is contributed by 36–43 (GRSGGGKT).

Belongs to the ABC transporter superfamily. Aliphatic sulfonates importer (TC 3.A.1.17.2) family. The complex is composed of two ATP-binding proteins (SsuB), two transmembrane proteins (SsuC) and a solute-binding protein (SsuA).

The protein localises to the cell membrane. It catalyses the reaction ATP + H2O + aliphatic sulfonate-[sulfonate-binding protein]Side 1 = ADP + phosphate + aliphatic sulfonateSide 2 + [sulfonate-binding protein]Side 1.. In terms of biological role, part of the ABC transporter complex SsuABC involved in aliphatic sulfonates import. Responsible for energy coupling to the transport system. This Frankia alni (strain DSM 45986 / CECT 9034 / ACN14a) protein is Aliphatic sulfonates import ATP-binding protein SsuB 2.